Consider the following 115-residue polypeptide: Urease subunit beta (115 aa).

This sequence belongs to the urease beta subunit family. In terms of assembly, heterotrimer of UreA (gamma), UreB (beta) and UreC (alpha) subunits. Three heterotrimers associate to form the active enzyme.

It is found in the cytoplasm. It catalyses the reaction urea + 2 H2O + H(+) = hydrogencarbonate + 2 NH4(+). It participates in nitrogen metabolism; urea degradation; CO(2) and NH(3) from urea (urease route): step 1/1. This chain is Urease subunit beta, found in Arthrobacter sp. (strain FB24).